We begin with the raw amino-acid sequence, 102 residues long: uncharacterized protein (102 aa).

Residues 36 to 55 (IISLLAIFIKMCLWLWKQFL) traverse the membrane as a helical segment.

The protein resides in the membrane. This is an uncharacterized protein from Homo sapiens (Human).